The sequence spans 489 residues: Serotonin-gated chloride channel mod-1 (489 aa).

A signal peptide spans 1–20; sequence MKFIPEITLLLLLFVHSTQA. At 21 to 240 the chain is on the extracellular side; it reads KGKRRKCPEG…VTFTFKRRYG (220 aa). Asn-44, Asn-103, and Asn-144 each carry an N-linked (GlcNAc...) asparagine glycan. Residues Tyr-180 and Trp-226 each coordinate serotonin. Transmembrane regions (helical) follow at residues 241-261, 274-294, and 304-324; these read FYII…WVSF, VGIS…KNLP, and VWML…AFVC. Residues 325-458 lie on the Cytoplasmic side of the membrane; sequence YISRCQNSVR…ARFHPEAVDK (134 aa). Residues 365 to 398 form a disordered region; that stretch reads GSVISHYHPTSNGNGNNNRHDTPQVTGRGSLHRN. Residues 372–391 are compositionally biased toward polar residues; the sequence is HPTSNGNGNNNRHDTPQVTG. Residues 459-479 traverse the membrane as a helical segment; the sequence is FSIVAFPLAFTMFNLVYWWHY.

The protein belongs to the ligand-gated ion channel (TC 1.A.9) family. Expressed in a subset of muscles, and head and tail neurons, including RME and GABAergic ventral nerve cord neurons. Expressed in AIY, RME, RID, RIF, ASI, DD1-6, and PVN neurons.

It is found in the membrane. Its subcellular location is the cell membrane. Functionally, functions as a 5-hydroxytryptamine (serotonin) receptor. This receptor is a ligand-gated anion-specific ion channel, selective for chloride ions. Relays a long-range endocrine signal from the body cavity neurons to modulate distal adipose triglyceride lipase atgl-1 function, via the nuclear receptor nhr-76. Together with the G-protein coupled serotonin receptor ser-1 involved in male mating behavior. May mediate an inhibitory effect of serotonin on egg laying. Involved in regulating locomotory behavior, perhaps by modulating interneuronal signaling, acting in concert with G-protein coupled serotonin receptor ser-4. In the presence of food, plays a role in initiating and extending dwelling behavior, perhaps acting in AIY, RIF and ASI neurons, in opposition to neuropeptide PDF-mediated signaling. Plays a role in aversive learning upon exposure to pathogens such as Gram-negative bacterium P.aeruginosa strain PA14; perhaps acting in interneurons in response to serotonin released by the serotonergic ADF neurons. In Caenorhabditis elegans, this protein is Serotonin-gated chloride channel mod-1.